A 475-amino-acid chain; its full sequence is BTB/POZ domain-containing protein 10 (475 aa).

Residues 1–143 (MAGRPHPYDG…SSQSSSDGSC (143 aa)) are disordered. Basic residues predominate over residues 22-31 (LHSRPRKLYK). The span at 57 to 80 (GHERSRDRRRSSDRSRDSSHERTE) shows a compositional bias: basic and acidic residues. Residues 81–94 (SQLTPCIRNVTSPT) show a composition bias toward polar residues. The segment covering 97–107 (HHVEREKDHSS) has biased composition (basic and acidic residues). Low complexity predominate over residues 108–142 (SRPSSPRPQKASPNGSISSAGNSSRNSSQSSSDGS). An interaction with AKT family members region spans residues 146 to 475 (AGEMVFVYEN…LDPDAQNPTL (330 aa)). Positions 167 to 241 (ERVTLIVDNT…YKTGIIRCPD (75 aa)) constitute a BTB domain. The segment at 456-475 (PIHPPSGNSDLDPDAQNPTL) is disordered.

As to quaternary structure, interacts (via C-terminal 330-amino-acid region) with AKT1; AKT2 and AKT3. Interacts with PPP2CA and PPP1CA.

Its subcellular location is the nucleus. It localises to the cytoplasm. Plays a major role as an activator of AKT family members by inhibiting PPP2CA-mediated dephosphorylation, thereby keeping AKTs activated. Plays a role in preventing motor neuronal death and in accelerating the growth of pancreatic beta cells. The chain is BTB/POZ domain-containing protein 10 (BTBD10) from Pongo abelii (Sumatran orangutan).